The chain runs to 215 residues: V-type ATP synthase subunit D (215 aa).

This sequence belongs to the V-ATPase D subunit family.

Produces ATP from ADP in the presence of a proton gradient across the membrane. This chain is V-type ATP synthase subunit D, found in Anaeromyxobacter sp. (strain Fw109-5).